We begin with the raw amino-acid sequence, 179 residues long: uncharacterized protein (179 aa).

The protein localises to the plastid. It localises to the cyanelle. This is an uncharacterized protein from Cyanophora paradoxa.